The following is a 388-amino-acid chain: uncharacterized protein (388 aa).

A coiled-coil region spans residues 68–96 (KVDRMSEEEERMAIATRKAKEVAKELSET). Positions 162–388 (GSHPLVREFN…PPQQDWFDSV (227 aa)) are disordered. Composition is skewed to basic and acidic residues over residues 166–176 (LVREFNGEKPP) and 196–208 (ATDKKTGSKQSDK). A compositionally biased stretch (basic residues) spans 233 to 251 (GVKHQHAIRRDDRHRHGMR). 2 stretches are compositionally biased toward low complexity: residues 265–279 (QQQQCPVQGQQSRGQ) and 293–346 (QRRP…QRPA).

This is an uncharacterized protein from Frog virus 3 (isolate Goorha) (FV-3).